The chain runs to 246 residues: Zinc import ATP-binding protein ZnuC (246 aa).

Positions L24–I244 constitute an ABC transporter domain. G56–T63 is a binding site for ATP.

This sequence belongs to the ABC transporter superfamily. Zinc importer (TC 3.A.1.15.5) family. In terms of assembly, the complex is composed of two ATP-binding proteins (ZnuC), two transmembrane proteins (ZnuB) and a solute-binding protein (ZnuA).

The protein resides in the cell membrane. It carries out the reaction Zn(2+)(out) + ATP(in) + H2O(in) = Zn(2+)(in) + ADP(in) + phosphate(in) + H(+)(in). Its function is as follows. Part of the ABC transporter complex ZnuABC involved in zinc import. Responsible for energy coupling to the transport system. This Wolbachia sp. subsp. Brugia malayi (strain TRS) protein is Zinc import ATP-binding protein ZnuC.